The following is a 349-amino-acid chain: Pseudouridylate synthase TRUB1 (349 aa).

A2 bears the N-acetylalanine mark. Position 11 is a phosphoserine (S11). D121 acts as the Nucleophile in catalysis.

The protein belongs to the pseudouridine synthase TruB family. In terms of tissue distribution, highly expressed in heart, skeletal muscle and liver. Expressed at lower levels in lung, small intestine, kidney and spleen.

Its subcellular location is the nucleus. The protein localises to the cytoplasm. It localises to the cytosol. It carries out the reaction a uridine in mRNA = a pseudouridine in mRNA. The catalysed reaction is a uridine in tRNA = a pseudouridine in tRNA. The enzyme catalyses uridine(55) in tRNA = pseudouridine(55) in tRNA. Its function is as follows. Pseudouridine synthase that catalyzes pseudouridylation of mRNAs and tRNAs. Mediates pseudouridylation of mRNAs with the consensus sequence 5'-GUUCNANNC-3', harboring a stem-loop structure. Constitutes the major pseudouridine synthase acting on mRNAs. Also catalyzes pseudouridylation of some tRNAs, including synthesis of pseudouridine(55) from uracil-55, in the psi GC loop of a subset of tRNAs. Promotes the processing of pri-let-7 microRNAs (pri-miRNAs) independently of its RNA pseudouridylate synthase activity. Acts by binding to the stem-loop structure on pri-let-7, preventing LIN28-binding (LIN28A and/or LIN28B), thereby enhancing the interaction between pri-let-7 and the microprocessor DGCR8, which mediates miRNA maturation. This Homo sapiens (Human) protein is Pseudouridylate synthase TRUB1.